The chain runs to 581 residues: Adenine deaminase (581 aa).

This sequence belongs to the metallo-dependent hydrolases superfamily. Adenine deaminase family. Mn(2+) serves as cofactor.

The catalysed reaction is adenine + H2O + H(+) = hypoxanthine + NH4(+). In Brucella melitensis biotype 1 (strain ATCC 23456 / CCUG 17765 / NCTC 10094 / 16M), this protein is Adenine deaminase.